The chain runs to 229 residues: All-trans retinoic acid-induced differentiation factor (229 aa).

Residues Met1–Ala30 form the signal peptide. The Extracellular segment spans residues Leu31 to Ser199. N-linked (GlcNAc...) asparagine glycans are attached at residues Asn44, Asn79, Asn157, and Asn168. The 42-residue stretch at Gln152–Met193 folds into the EGF-like domain. Intrachain disulfides connect Cys156-Cys171, Cys165-Cys181, and Cys183-Cys192. The chain crosses the membrane as a helical span at residues Leu200–Ala220. The Cytoplasmic portion of the chain corresponds to Thr221–Ser229.

As to quaternary structure, interacts with NELL1; the interaction promotes osteoblastic differentiation and mineralization. Interacts with SLC37A3; the interaction is direct and both proteins are mutually dependent for their stability. As to expression, weakly expressed in hematopoietic cell lines.

It is found in the nucleus envelope. It localises to the cell membrane. Its subcellular location is the lysosome membrane. Promotes osteoblast cell differentiation and terminal mineralization. Plays a role in inducing the cell cycle arrest via inhibiting CCND1 expression in all-trans-retinoic acid (ATRA) signal pathway. In osteoclasts, forms a transporter complex with ATRAID for nitrogen-containing-bisphophonates (N-BPs) required for releasing N-BP molecules that have trafficked to lysosomes through fluid-phase endocytosis into the cytosol. The chain is All-trans retinoic acid-induced differentiation factor from Homo sapiens (Human).